The chain runs to 205 residues: uncharacterized protein (205 aa).

A run of 3 helical transmembrane segments spans residues 45-65, 119-139, and 144-164; these read LFFY…FLVI, VFWL…VTAF, and FEWM…LWGY.

This sequence belongs to the TVP23 family.

Its subcellular location is the membrane. This is an uncharacterized protein from Caenorhabditis elegans.